The chain runs to 598 residues: EF-hand and coiled-coil domain-containing protein 1 (598 aa).

The tract at residues 1–22 (MEPVSTGAEAGMEGAGGDPYRR) is disordered. In terms of domain architecture, EF-hand spans 54-89 (GLDQYLQEVFHHLDCRGAGRLPRADFRALCAVLGLR). Disordered stretches follow at residues 96-127 (AGQA…DTDE), 175-198 (RLRR…PDCE), and 326-411 (YRSE…KKTP). The span at 175–185 (RLRRPRRRRRP) shows a compositional bias: basic residues. A coiled-coil region spans residues 196 to 303 (DCERVARLEE…RSLHRVRELE (108 aa)). Residues 343-359 (PGDKSNEPEDAGTRDPD) are compositionally biased toward basic and acidic residues. The span at 394–404 (SDEEEVEEERW) shows a compositional bias: acidic residues. Residues 479–533 (TSEEEAELQQKVEENEHLRLELQMVETERVRLSLLEEKLVDVLQLLQRLRDLNIS) adopt a coiled-coil conformation.

The protein is EF-hand and coiled-coil domain-containing protein 1 (EFCC1) of Homo sapiens (Human).